The chain runs to 187 residues: Dihydrofolate reductase (187 aa).

Positions 4 to 185 (PLNCIVAVSQ…IKYKFEVYEK (182 aa)) constitute a DHFR domain. NADP(+) contacts are provided by residues Ala-10 and 16–22 (GIGKNGD). Residue 31-36 (EFKYFQ) participates in substrate binding. At Lys-33 the chain carries N6-acetyllysine; alternate. Lys-33 is subject to N6-succinyllysine; alternate. 55 to 57 (RKT) provides a ligand contact to NADP(+). Arg-71 contributes to the substrate binding site. NADP(+)-binding positions include 77 to 79 (SRE) and 117 to 124 (GGSSVYQE).

Belongs to the dihydrofolate reductase family. As to quaternary structure, homodimer.

It is found in the mitochondrion. Its subcellular location is the cytoplasm. It catalyses the reaction (6S)-5,6,7,8-tetrahydrofolate + NADP(+) = 7,8-dihydrofolate + NADPH + H(+). It functions in the pathway cofactor biosynthesis; tetrahydrofolate biosynthesis; 5,6,7,8-tetrahydrofolate from 7,8-dihydrofolate: step 1/1. In terms of biological role, key enzyme in folate metabolism. Contributes to the de novo mitochondrial thymidylate biosynthesis pathway. Catalyzes an essential reaction for de novo glycine and purine synthesis, and for DNA precursor synthesis. Binds its own mRNA. In Rattus norvegicus (Rat), this protein is Dihydrofolate reductase (Dhfr).